Reading from the N-terminus, the 214-residue chain is ATP phosphoribosyltransferase (214 aa).

This sequence belongs to the ATP phosphoribosyltransferase family. Short subfamily. Heteromultimer composed of HisG and HisZ subunits.

Its subcellular location is the cytoplasm. It catalyses the reaction 1-(5-phospho-beta-D-ribosyl)-ATP + diphosphate = 5-phospho-alpha-D-ribose 1-diphosphate + ATP. It functions in the pathway amino-acid biosynthesis; L-histidine biosynthesis; L-histidine from 5-phospho-alpha-D-ribose 1-diphosphate: step 1/9. Functionally, catalyzes the condensation of ATP and 5-phosphoribose 1-diphosphate to form N'-(5'-phosphoribosyl)-ATP (PR-ATP). Has a crucial role in the pathway because the rate of histidine biosynthesis seems to be controlled primarily by regulation of HisG enzymatic activity. The polypeptide is ATP phosphoribosyltransferase (Deinococcus deserti (strain DSM 17065 / CIP 109153 / LMG 22923 / VCD115)).